Consider the following 67-residue polypeptide: Large ribosomal subunit protein bL32 (67 aa).

Basic residues predominate over residues 1–19; sequence MAVPKRKMSRSNTRARRSQ. A disordered region spans residues 1–21; sequence MAVPKRKMSRSNTRARRSQWK.

This sequence belongs to the bacterial ribosomal protein bL32 family.

This Clavibacter sepedonicus (Clavibacter michiganensis subsp. sepedonicus) protein is Large ribosomal subunit protein bL32.